The sequence spans 117 residues: Ribosome maturation factor RimP (117 aa).

It belongs to the RimP family.

It is found in the cytoplasm. Its function is as follows. Required for maturation of 30S ribosomal subunits. The chain is Ribosome maturation factor RimP from Rickettsia prowazekii (strain Madrid E).